The primary structure comprises 314 residues: Acetaldehyde dehydrogenase 2 (314 aa).

NAD(+) is bound at residue 15–18; that stretch reads SGNI. Catalysis depends on Cys-133, which acts as the Acyl-thioester intermediate. NAD(+)-binding positions include 164 to 172 and Asn-289; that span reads SAGPGTRQN.

This sequence belongs to the acetaldehyde dehydrogenase family.

It catalyses the reaction acetaldehyde + NAD(+) + CoA = acetyl-CoA + NADH + H(+). The sequence is that of Acetaldehyde dehydrogenase 2 from Nocardioides sp. (strain ATCC BAA-499 / JS614).